Here is a 553-residue protein sequence, read N- to C-terminus: Undecaprenyl phosphate-alpha-4-amino-4-deoxy-L-arabinose arabinosyl transferase (553 aa).

Helical transmembrane passes span 8–28 (LLFS…RALW), 81–101 (FAVR…VYWL), 113–133 (LLSA…SYAV), 136–156 (PMVT…AQSA), 176–196 (LMTK…PWMI), 204–224 (LLLF…PWAI), 255–275 (APFW…VGLL), 289–309 (NSGS…FSLA), 313–333 (LPTY…HHGI), 351–371 (VAFG…WGLV), 384–404 (VLLG…CLVA), and 412–432 (AALC…DKVI).

The protein belongs to the glycosyltransferase 83 family.

The protein resides in the cell inner membrane. The enzyme catalyses 4-amino-4-deoxy-alpha-L-arabinopyranosyl di-trans,octa-cis-undecaprenyl phosphate + lipid IVA = lipid IIA + di-trans,octa-cis-undecaprenyl phosphate.. It participates in lipopolysaccharide metabolism; 4-amino-4-deoxy-beta-L-arabinose-lipid A biosynthesis. Catalyzes the transfer of the L-Ara4N moiety of the glycolipid undecaprenyl phosphate-alpha-L-Ara4N to lipid A. The modified arabinose is attached to lipid A and is required for resistance to polymyxin and cationic antimicrobial peptides. The sequence is that of Undecaprenyl phosphate-alpha-4-amino-4-deoxy-L-arabinose arabinosyl transferase from Erwinia tasmaniensis (strain DSM 17950 / CFBP 7177 / CIP 109463 / NCPPB 4357 / Et1/99).